The following is a 171-amino-acid chain: LIM domain transcription factor LMO4-A (171 aa).

Residues 1-19 (MVNNRSSESTTTAVSSNGS) are compositionally biased toward polar residues. Residues 1–21 (MVNNRSSESTTTAVSSNGSPP) are disordered. LIM zinc-binding domains are found at residues 22 to 84 (KACA…LFGN) and 86 to 148 (GACN…GLLN).

At the start of gastrulation (stage 10), expressed in the mesodermal marginal zone. Shortly after (stage 11), expression is down-regulated in the dorsal most region. During neurulation, expressed in the neural plate and ventral epidermis. At late neurula stages, also expressed more rostrally, and then in the brain, migrating neural crests and ventral epidermis.

Acts as a positive cofactor of GATA transcription factors to establish the identity of the ventral mesoderm during gastrulation. Down-regulation in the dorsal mesoderm is necessary for the proper formation of this territory since, when present, lmo4 may bind ldb1 and restrict the availability of this cofactor for Spemman organizer transcription factors. At neurula stages, suppresses primary neuron differentiation and modulates gene expression at the Isthmic Organizer of the midbrain-hindbrain boundary. The polypeptide is LIM domain transcription factor LMO4-A (lmo4-a) (Xenopus laevis (African clawed frog)).